The following is a 347-amino-acid chain: GMP reductase (347 aa).

108 to 131 (ADFEKTKQILDLNPALNFVCIDVA) provides a ligand contact to NADP(+). Positions 181 and 183 each coordinate K(+). Cysteine 186 acts as the Thioimidate intermediate in catalysis. 216 to 239 (IVSDGGCTTPGDVAKAFGGGADFV) is a binding site for NADP(+).

The protein belongs to the IMPDH/GMPR family. GuaC type 1 subfamily. Homotetramer.

It carries out the reaction IMP + NH4(+) + NADP(+) = GMP + NADPH + 2 H(+). Catalyzes the irreversible NADPH-dependent deamination of GMP to IMP. It functions in the conversion of nucleobase, nucleoside and nucleotide derivatives of G to A nucleotides, and in maintaining the intracellular balance of A and G nucleotides. The protein is GMP reductase of Escherichia coli O139:H28 (strain E24377A / ETEC).